We begin with the raw amino-acid sequence, 390 residues long: Nucleosome assembly protein 1-like 1 (390 aa).

Residues 1–10 (MADIDNKEQS) show a composition bias toward basic and acidic residues. Positions 1-32 (MADIDNKEQSELDQDLEDVEEVEEEETGEETK) are disordered. Ala-2 carries the post-translational modification N-acetylalanine. At Ser-10 the chain carries Phosphoserine. The span at 11 to 28 (ELDQDLEDVEEVEEEETG) shows a compositional bias: acidic residues. Residues Thr-62 and Thr-64 each carry the phosphothreonine modification. Ser-69 is subject to Phosphoserine. Position 116 is an N6-acetyllysine (Lys-116). Positions 125–150 (YEPTEEECEWKPDEEDEVSEELKEKA) match the NAP1L motif motif. The segment covering 131–143 (ECEWKPDEEDEVS) has biased composition (acidic residues). The segment at 131 to 163 (ECEWKPDEEDEVSEELKEKAKIEDEKKDEEKED) is disordered. At Ser-143 the chain carries Phosphoserine. The segment covering 144 to 163 (EELKEKAKIEDEKKDEEKED) has biased composition (basic and acidic residues). The Nuclear localization signal motif lies at 272-278 (IKKKQKH). Over residues 345–375 (AIEDDDDDYDEEGEEADEEGEEEGDEENDPD) the composition is skewed to acidic residues. The tract at residues 345-390 (AIEDDDDDYDEEGEEADEEGEEEGDEENDPDYDPKKDQNPAECKQQ) is disordered. 2 positions are modified to 5-glutamyl polyglycine: Glu-358 and Glu-359. Basic and acidic residues predominate over residues 376 to 390 (YDPKKDQNPAECKQQ). The residue at position 387 (Cys-387) is a Cysteine methyl ester. The S-farnesyl cysteine moiety is linked to residue Cys-387. Residues 388-390 (KQQ) constitute a propeptide, removed in mature form.

The protein belongs to the nucleosome assembly protein (NAP) family. As to quaternary structure, homodimer. The dimer binds strongly and sequentially to single and double H2A-H2B heterodimers. Interacts with ERCC6; this interaction increases ERCC6 processivity. Interacts with RAD54. Interacts with SETD1A. Polyglycylated by TTLL10 on glutamate residues, resulting in polyglycine chains on the gamma-carboxyl group. Both polyglutamylation and polyglycylation modifications can coexist on the same protein on adjacent residues, and lowering polyglycylation levels increases polyglutamylation, and reciprocally. In terms of processing, polyglutamylated by TTLL4 on glutamate residues, resulting in polyglutamate chains on the gamma-carboxyl group. Both polyglutamylation and polyglycylation modifications can coexist on the same protein on adjacent residues, and lowering polyglycylation levels increases polyglutamylation, and reciprocally.

It localises to the nucleus. It is found in the melanosome. The protein localises to the cytoplasm. Its function is as follows. Histone chaperone that plays a role in the nuclear import of H2A-H2B and nucleosome assembly. Also participates in several important DNA repair mechanisms: greatly enhances ERCC6-mediated chromatin remodeling which is essential for transcription-coupled nucleotide excision DNA repair. Also stimulates homologous recombination (HR) by RAD51 and RAD54 which is essential in mitotic DNA double strand break (DSB) repair. Plays a key role in the regulation of embryonic neurogenesis. Promotes the proliferation of neural progenitors and inhibits neuronal differentiation during cortical development. Regulates neurogenesis via the modulation of RASSF10; regulates RASSF10 expression by promoting SETD1A-mediated H3K4 methylation at the RASSF10 promoter. The polypeptide is Nucleosome assembly protein 1-like 1 (Nap1l1) (Rattus norvegicus (Rat)).